We begin with the raw amino-acid sequence, 162 residues long: CD-NTase-associated protein 7 (162 aa).

Positions 138 to 162 are disordered; that stretch reads HSGLTQSGGREYSSNGYGMQRKDYN. A compositionally biased stretch (polar residues) spans 139–154; it reads SGLTQSGGREYSSNGY.

This sequence belongs to the HORMA family. HORMA1 subfamily. As to quaternary structure, forms complexes with CdnC with 1:1 and 2:2 stoichimetry, and a 1:1:6 CdnC:Cap7:Cap6 complex.

Sensor protein of a CBASS antivirus system. CBASS (cyclic oligonucleotide-based antiphage signaling system) provides immunity against bacteriophage. The CD-NTase protein synthesizes cyclic nucleotides in response to infection; these serve as specific second messenger signals. The signals activate a diverse range of effectors, leading to bacterial cell death and thus abortive phage infection. A type III CBASS system. Expression of this CBASS system (Cap18-Cap6-Cap7-CdnC-CapW-Cap17) in a susceptible E.coli (strain MG1655) confers resistance to bacteriophage P1. The sensor protein for this CBASS system. Binds to a closure peptide, which allows it to activate CdnC for second messenger synthesis. The polypeptide is CD-NTase-associated protein 7 (Escherichia coli (strain KTE188)).